Reading from the N-terminus, the 206-residue chain is Protein Nef (206 aa).

Glycine 2 is lipidated: N-myristoyl glycine; by host. A Phosphoserine; by host modification is found at serine 6. The tract at residues 62 to 65 (EEEK) is acidic; interacts with host PACS1 and PACS2; stabilizes the interaction of NEF/MHC-I with host AP1M1; necessary for MHC-I internalization. The segment at 69 to 78 (PVTPQVPLRP) is SH3-binding; interaction with Src family tyrosine kinases. The short motif at 72–75 (PQVP) is the PxxP; stabilizes the interaction of NEF/MHC-I with host AP1M1; necessary for MHC-I internalization element. The interval 108–124 (DILDLWIYHTQGYFPDW) is mediates dimerization, Nef-PTE1 interaction. Positions 148-180 (VEPEKLEEANKGENTSLLHPVSLHGMDDPEREV) are binding to ATP6V1H. A Dileucine internalization motif; necessary for CD4 internalization motif is present at residues 164-165 (LL). The Diacidic; necessary for CD4 internalization motif lies at 174–175 (DD).

It belongs to the lentivirus primate group Nef protein family. Monomer; cytosolic form. Homodimer; membrane bound form. Interacts with Nef associated p21-activated kinase (PAK2); this interaction activates PAK2. Associates with the Nef-MHC-I-AP1 complex; this complex is required for MHC-I internalization. Interacts (via C-terminus) with host PI3-kinase. Interacts with host PACS1; this interaction seems to be weak. Interacts with host PACS2. Interacts with host LCK and MAPK3; these interactions inhibit the kinase activity of the latter. Interacts with host ATP6V1H; this interaction may play a role in CD4 endocytosis. Associates with the CD4-Nef-AP2 complex; this complex is required for CD4 internalization. Interacts with host AP2 subunit alpha and AP2 subunit sigma2. Interacts with TCR-zeta chain; this interaction up-regulates the Fas ligand (FasL) surface expression. Interacts with host HCK, LYN, and SRC; these interactions activate the Src family kinases. Interacts with MAP3K5; this interaction inhibits the Fas and TNFR-mediated death signals. Interacts with beta-COP and PTE1. Interacts with human RACK1; this increases Nef phosphorylation by PKC. Interacts with TP53; this interaction decreases the half-life of TP53, protecting the infected cell against p53-mediated apoptosis. In terms of processing, the virion-associated Nef proteins are cleaved by the viral protease to release the soluble C-terminal core protein. Nef is probably cleaved concomitantly with viral structural proteins on maturation of virus particles. Post-translationally, myristoylated. Phosphorylated on serine residues, probably by host PKCdelta and theta.

It is found in the host cell membrane. Its subcellular location is the virion. It localises to the secreted. The protein localises to the host Golgi apparatus membrane. Factor of infectivity and pathogenicity, required for optimal virus replication. Alters numerous pathways of T-lymphocyte function and down-regulates immunity surface molecules in order to evade host defense and increase viral infectivity. Alters the functionality of other immunity cells, like dendritic cells, monocytes/macrophages and NK cells. Functionally, in infected CD4(+) T-lymphocytes, down-regulates the surface MHC-I, mature MHC-II, CD4, CD28, CCR5 and CXCR4 molecules. Mediates internalization and degradation of host CD4 through the interaction of with the cytoplasmic tail of CD4, the recruitment of AP-2 (clathrin adapter protein complex 2), internalization through clathrin coated pits, and subsequent transport to endosomes and lysosomes for degradation. Diverts host MHC-I molecules to the trans-Golgi network-associated endosomal compartments by an endocytic pathway to finally target them for degradation. MHC-I down-regulation may involve AP-1 (clathrin adapter protein complex 1) or possibly Src family kinase-ZAP70/Syk-PI3K cascade recruited by PACS2. In consequence infected cells are masked for immune recognition by cytotoxic T-lymphocytes. Decreasing the number of immune receptors also prevents reinfection by more HIV particles (superinfection). Down-regulates host SERINC3 and SERINC5 thereby excluding these proteins from the viral particles. Virion infectivity is drastically higher when SERINC3 or SERINC5 are excluded from the viral envelope, because these host antiviral proteins impair the membrane fusion event necessary for subsequent virion penetration. In terms of biological role, bypasses host T-cell signaling by inducing a transcriptional program nearly identical to that of anti-CD3 cell activation. Interaction with TCR-zeta chain up-regulates the Fas ligand (FasL). Increasing surface FasL molecules and decreasing surface MHC-I molecules on infected CD4(+) cells send attacking cytotoxic CD8+ T-lymphocytes into apoptosis. Its function is as follows. Plays a role in optimizing the host cell environment for viral replication without causing cell death by apoptosis. Protects the infected cells from apoptosis in order to keep them alive until the next virus generation is ready to strike. Inhibits the Fas and TNFR-mediated death signals by blocking MAP3K5/ASK1. Decreases the half-life of TP53, protecting the infected cell against p53-mediated apoptosis. Inhibits the apoptotic signals regulated by the Bcl-2 family proteins through the formation of a Nef/PI3-kinase/PAK2 complex that leads to activation of PAK2 and induces phosphorylation of host BAD. Extracellular Nef protein targets CD4(+) T-lymphocytes for apoptosis by interacting with CXCR4 surface receptors. This Homo sapiens (Human) protein is Protein Nef.